The chain runs to 215 residues: Tail hub protein A (215 aa).

Heterotrimer with THB. The heterotrimers further assemble as 12 docking hubs that anchor the trimeric tail fibers.

It is found in the virion. Its function is as follows. Forms the tail hub together with tail hub protein B (THB). The chain is Tail hub protein A from Bacteroides phage crAss001 (Bacteroides phage PhiCrAss001).